Here is a 62-residue protein sequence, read N- to C-terminus: ATP synthase subunit J, mitochondrial (62 aa).

Residues 13-32 (IVKPLWPYAVGGVITFFLFA) form a helical membrane-spanning segment.

As to quaternary structure, F-type ATP synthases have 2 components, the catalytic core F(1) and the membrane-embedded component F(0), linked together by a central stalk and a peripheral stalk. The central stalk, also called rotor shaft, is often seen as part of F(1). The peripheral stalk is seen as part of F(0). F(0) contains the membrane channel next to the rotor. F-type ATP synthases form dimers but each monomer functions independently in ATP generation. The dimer consists of 17 different polypeptides: ATP1 (subunit alpha, 3 molecules per monomer, part of F(1)), ATP2 (subunit beta, 3 copies per monomer, part of F(1)), ATP3 (subunit gamma, part of the central stalk), ATP4 (subunit b, part of the peripheral stalk), ATP5/OSCP (subunit 5/OSCP, part of the peripheral stalk), ATP6 (subunit a, part of the peripheral stalk), ATP7 (subunit d, part of the peripheral stalk), ATP8 (subunit 8, part of the peripheral stalk), OLI1 (subunit c, part of the rotor, 10 molecules per monomer), ATP14 (subunit h, part of the peripheral stalk), ATP15 (subunit epsilon, part of the central stalk), ATP16 (subunit delta, part of the central stalk), ATP17 (subunit f, part of the peripheral stalk), ATP18 (subunit i/j, part of the peripheral stalk), ATP19 (subunit k, dimer-specific, at interface between monomers), ATP20 (subunit g, at interface between monomers), TIM11 (subunit e, at interface between monomers).

The protein resides in the mitochondrion inner membrane. Functionally, mitochondrial membrane ATP synthase (F(1)F(0) ATP synthase or Complex V) produces ATP from ADP in the presence of a proton gradient across the membrane which is generated by electron transport complexes of the respiratory chain. F-type ATP synthases consist of two structural domains, F(1) - containing the extramembraneous catalytic core, and F(0) - containing the membrane proton channel, linked together by a central stalk and a peripheral stalk. During catalysis, ATP synthesis in the catalytic domain of F(1) is coupled via a rotary mechanism of the central stalk subunits to proton translocation. Part of the complex F(0) domain. Minor subunit located with subunit a/ATP6 in the membrane. The chain is ATP synthase subunit J, mitochondrial from Yarrowia lipolytica (strain CLIB 122 / E 150) (Yeast).